Consider the following 320-residue polypeptide: Phosphoribosylaminoimidazole-succinocarboxamide synthase (320 aa).

The tract at residues 283–303 (ESDWDRNSPPPPLPESIAHQT) is disordered.

The protein belongs to the SAICAR synthetase family.

The catalysed reaction is 5-amino-1-(5-phospho-D-ribosyl)imidazole-4-carboxylate + L-aspartate + ATP = (2S)-2-[5-amino-1-(5-phospho-beta-D-ribosyl)imidazole-4-carboxamido]succinate + ADP + phosphate + 2 H(+). It participates in purine metabolism; IMP biosynthesis via de novo pathway; 5-amino-1-(5-phospho-D-ribosyl)imidazole-4-carboxamide from 5-amino-1-(5-phospho-D-ribosyl)imidazole-4-carboxylate: step 1/2. The protein is Phosphoribosylaminoimidazole-succinocarboxamide synthase of Rhodopirellula baltica (strain DSM 10527 / NCIMB 13988 / SH1).